A 573-amino-acid polypeptide reads, in one-letter code: Proline--tRNA ligase (573 aa).

It belongs to the class-II aminoacyl-tRNA synthetase family. ProS type 1 subfamily. As to quaternary structure, homodimer.

Its subcellular location is the cytoplasm. The catalysed reaction is tRNA(Pro) + L-proline + ATP = L-prolyl-tRNA(Pro) + AMP + diphosphate. Its function is as follows. Catalyzes the attachment of proline to tRNA(Pro) in a two-step reaction: proline is first activated by ATP to form Pro-AMP and then transferred to the acceptor end of tRNA(Pro). As ProRS can inadvertently accommodate and process non-cognate amino acids such as alanine and cysteine, to avoid such errors it has two additional distinct editing activities against alanine. One activity is designated as 'pretransfer' editing and involves the tRNA(Pro)-independent hydrolysis of activated Ala-AMP. The other activity is designated 'posttransfer' editing and involves deacylation of mischarged Ala-tRNA(Pro). The misacylated Cys-tRNA(Pro) is not edited by ProRS. The sequence is that of Proline--tRNA ligase from Moorella thermoacetica (strain ATCC 39073 / JCM 9320).